A 78-amino-acid chain; its full sequence is Putative membrane protein insertion efficiency factor (78 aa).

The protein belongs to the UPF0161 family.

It localises to the cell inner membrane. Functionally, could be involved in insertion of integral membrane proteins into the membrane. This is Putative membrane protein insertion efficiency factor from Prochlorococcus marinus subsp. pastoris (strain CCMP1986 / NIES-2087 / MED4).